A 176-amino-acid chain; its full sequence is 3-hydroxydecanoyl-[acyl-carrier-protein] dehydratase (176 aa).

His70 is an active-site residue.

Belongs to the thioester dehydratase family. FabA subfamily. As to quaternary structure, homodimer.

The protein localises to the cytoplasm. The enzyme catalyses a (3R)-hydroxyacyl-[ACP] = a (2E)-enoyl-[ACP] + H2O. It carries out the reaction (3R)-hydroxydecanoyl-[ACP] = (2E)-decenoyl-[ACP] + H2O. It catalyses the reaction (2E)-decenoyl-[ACP] = (3Z)-decenoyl-[ACP]. It functions in the pathway lipid metabolism; fatty acid biosynthesis. Necessary for the introduction of cis unsaturation into fatty acids. Catalyzes the dehydration of (3R)-3-hydroxydecanoyl-ACP to E-(2)-decenoyl-ACP and then its isomerization to Z-(3)-decenoyl-ACP. Can catalyze the dehydratase reaction for beta-hydroxyacyl-ACPs with saturated chain lengths up to 16:0, being most active on intermediate chain length. The sequence is that of 3-hydroxydecanoyl-[acyl-carrier-protein] dehydratase from Alkalilimnicola ehrlichii (strain ATCC BAA-1101 / DSM 17681 / MLHE-1).